The sequence spans 355 residues: Holliday junction branch migration complex subunit RuvB (355 aa).

The interval 1–193 (MGRFSEDSAD…FGFTAHMDFY (193 aa)) is large ATPase domain (RuvB-L). Residues leucine 32, arginine 33, glycine 74, lysine 77, threonine 78, serine 79, 140 to 142 (EDF), arginine 183, tyrosine 193, and arginine 230 contribute to the ATP site. Threonine 78 serves as a coordination point for Mg(2+). The small ATPAse domain (RuvB-S) stretch occupies residues 194-264 (EPSELERVLA…IAKYALEVYD (71 aa)). The interval 267–355 (ELGLDRLDRA…VGLGQTGLFD (89 aa)) is head domain (RuvB-H). DNA is bound by residues arginine 322 and arginine 327.

This sequence belongs to the RuvB family. Homohexamer. Forms an RuvA(8)-RuvB(12)-Holliday junction (HJ) complex. HJ DNA is sandwiched between 2 RuvA tetramers; dsDNA enters through RuvA and exits via RuvB. An RuvB hexamer assembles on each DNA strand where it exits the tetramer. Each RuvB hexamer is contacted by two RuvA subunits (via domain III) on 2 adjacent RuvB subunits; this complex drives branch migration. In the full resolvosome a probable DNA-RuvA(4)-RuvB(12)-RuvC(2) complex forms which resolves the HJ.

The protein resides in the cytoplasm. It catalyses the reaction ATP + H2O = ADP + phosphate + H(+). In terms of biological role, the RuvA-RuvB-RuvC complex processes Holliday junction (HJ) DNA during genetic recombination and DNA repair, while the RuvA-RuvB complex plays an important role in the rescue of blocked DNA replication forks via replication fork reversal (RFR). RuvA specifically binds to HJ cruciform DNA, conferring on it an open structure. The RuvB hexamer acts as an ATP-dependent pump, pulling dsDNA into and through the RuvAB complex. RuvB forms 2 homohexamers on either side of HJ DNA bound by 1 or 2 RuvA tetramers; 4 subunits per hexamer contact DNA at a time. Coordinated motions by a converter formed by DNA-disengaged RuvB subunits stimulates ATP hydrolysis and nucleotide exchange. Immobilization of the converter enables RuvB to convert the ATP-contained energy into a lever motion, pulling 2 nucleotides of DNA out of the RuvA tetramer per ATP hydrolyzed, thus driving DNA branch migration. The RuvB motors rotate together with the DNA substrate, which together with the progressing nucleotide cycle form the mechanistic basis for DNA recombination by continuous HJ branch migration. Branch migration allows RuvC to scan DNA until it finds its consensus sequence, where it cleaves and resolves cruciform DNA. In Mycolicibacterium vanbaalenii (strain DSM 7251 / JCM 13017 / BCRC 16820 / KCTC 9966 / NRRL B-24157 / PYR-1) (Mycobacterium vanbaalenii), this protein is Holliday junction branch migration complex subunit RuvB.